A 460-amino-acid chain; its full sequence is UDP-glucuronate 4-epimerase 6 (460 aa).

2 helical membrane-spanning segments follow: residues 41-61 (ATLLVALVLVLIFAINYPPLS) and 111-131 (GLSVLVTGAAGFVGSHCSLAL). 113-144 (SVLVTGAAGFVGSHCSLALRKRGDGVLGFDNF) is a binding site for NAD(+). Residue Tyr-263 is the Proton acceptor of the active site.

This sequence belongs to the NAD(P)-dependent epimerase/dehydratase family. Homodimer. In terms of tissue distribution, in roots, leaf veins, siliques, flowers, pollen and stems.

Its subcellular location is the golgi apparatus. It localises to the golgi stack membrane. It carries out the reaction UDP-alpha-D-glucuronate = UDP-alpha-D-galacturonate. Its function is as follows. Involved in the synthesis of the negatively charged monosaccharide that forms the backbone of pectic cell wall components. This is UDP-glucuronate 4-epimerase 6 (GAE6) from Arabidopsis thaliana (Mouse-ear cress).